The sequence spans 126 residues: Large ribosomal subunit protein bL12 (126 aa).

The protein belongs to the bacterial ribosomal protein bL12 family. In terms of assembly, homodimer. Part of the ribosomal stalk of the 50S ribosomal subunit. Forms a multimeric L10(L12)X complex, where L10 forms an elongated spine to which 2 to 4 L12 dimers bind in a sequential fashion. Binds GTP-bound translation factors.

Functionally, forms part of the ribosomal stalk which helps the ribosome interact with GTP-bound translation factors. Is thus essential for accurate translation. In Bifidobacterium longum (strain DJO10A), this protein is Large ribosomal subunit protein bL12.